A 574-amino-acid polypeptide reads, in one-letter code: PI-PLC X domain-containing protein DDB_G0269228 (574 aa).

Residues 1-42 (MFSSIMFKKKPKQNLNENEITSQSTTTTSTLSDSKPSEKKIK) form a disordered region. Low complexity predominate over residues 21–34 (TSQSTTTTSTLSDS). A PI-PLC X-box domain is found at 270–449 (GIKSSSLRVP…LKKRIINDDG (180 aa)).

This chain is PI-PLC X domain-containing protein DDB_G0269228, found in Dictyostelium discoideum (Social amoeba).